The following is a 107-amino-acid chain: MKNLAGLMKQATQMQARMEEMQSKLEGMTIEGSAGAGMVHVTLNGKGDMKAVKIDPKLADPAEMEMLQDLIVAACADARKLLDERASEEMKKVTGGMNLPAGLKFPF.

This sequence belongs to the YbaB/EbfC family. Homodimer.

The protein resides in the cytoplasm. Its subcellular location is the nucleoid. Its function is as follows. Binds to DNA and alters its conformation. May be involved in regulation of gene expression, nucleoid organization and DNA protection. This is Nucleoid-associated protein GDI3467/Gdia_2910 from Gluconacetobacter diazotrophicus (strain ATCC 49037 / DSM 5601 / CCUG 37298 / CIP 103539 / LMG 7603 / PAl5).